Reading from the N-terminus, the 445-residue chain is UPF0210 protein STER_0157 (445 aa).

This sequence belongs to the UPF0210 family. Homodimer.

This is UPF0210 protein STER_0157 from Streptococcus thermophilus (strain ATCC BAA-491 / LMD-9).